Reading from the N-terminus, the 158-residue chain is Flagellar assembly factor FliW (158 aa).

The protein belongs to the FliW family. As to quaternary structure, interacts with translational regulator CsrA and flagellin(s).

It is found in the cytoplasm. In terms of biological role, acts as an anti-CsrA protein, binds CsrA and prevents it from repressing translation of its target genes, one of which is flagellin. Binds to flagellin and participates in the assembly of the flagellum. This Moorella thermoacetica (strain ATCC 39073 / JCM 9320) protein is Flagellar assembly factor FliW.